The primary structure comprises 256 residues: tRNA (guanine-N(1)-)-methyltransferase (256 aa).

S-adenosyl-L-methionine-binding positions include glycine 119 and 139–144 (IGDYVV).

It belongs to the RNA methyltransferase TrmD family. As to quaternary structure, homodimer.

Its subcellular location is the cytoplasm. The enzyme catalyses guanosine(37) in tRNA + S-adenosyl-L-methionine = N(1)-methylguanosine(37) in tRNA + S-adenosyl-L-homocysteine + H(+). In terms of biological role, specifically methylates guanosine-37 in various tRNAs. The sequence is that of tRNA (guanine-N(1)-)-methyltransferase from Nitrosospira multiformis (strain ATCC 25196 / NCIMB 11849 / C 71).